The chain runs to 1117 residues: MISENYIEPAFLLPDLIEIQRSSFRWFLEEGLIEELNSFSPITDYTGKLELHFLGHNYKLKEPKYSVEEAKRRDSTYAVQMYVPTRLLNKETGDIKEQEVFIGDLPLMTDRGTFIINGAERVIVNQIVRSPGVYYKSEIDKNGRRTYSASLIPNRGAWLKFETDRNDLVWVRIDKTRKLSAQVLLKALGLSDNEIFDALRHPEYFQKTIEKEGQFSEEEALMELYRKLRPGEPPTVLGGQQLLDSRFFDPKRYDLGRVGRYKLNKKLRLSVPDTVRVLTSGDILAAVDYLINLEYDIGSIDDIDHLGNRRVRSVGELLQNQVRVGLNRLERIIRERMTVSDAEVLTPASLVNPKPLVAAIKEFFGSSQLSQFMDQTNPLAELTHKRRLSALGPGGLTRERAGFAVRDIHPSHYGRICPIETPEGPNAGLIGSLATHARVNQYGFLETPFRPVENGRVRFDQPAVYMTADEEDDLRVAPGDIPVDENGHIIGPQVPVRYRQEFSTTTPEQVDYVAVSPVQIVSVATSMIPFLEHDDANRALMGSNMQRQAVPLLKPERPLVGTGLEAQGARDSGMVIVSRTDGDVVYVDATEIRVRVSGQLPAASGKSTDNGQLTSQKGQEIRYTVSKYQRSNQDTCLNQKPLVRIGERVVAGQVLADGSSTEGGELALGQNIVVAYMPWEGYNYEDAILISERLVQDDIYTSIHIEKYEIEARQTKLGPEEITREIPNVGEDALRQLDEQGIIRIGAWVEAGDILVGKVTPKGESDQPPEEKLLRAIFGEKARDVRDNSLRVPNGEKGRVVDVRLFTREQGDELPPGANMVVRVYVAQKRKIQVGDKMAGRHGNKGIISRILPIEDMPYLPDGSPVDIVLNPLGVPSRMNVGQVFECLLGWAGHTLGVRFKITPFDEMYGEESSRRIVHGKLQEARDETGKDWVYNPDDPGKIMVFDGRTGEPFDRPVTIGVAYMLKLVHLVDDKIHARSTGPYSLVTQQPLGGKAQQGGQRFGEMEVWALEAFGAAYTLQELLTVKSDDMQGRNEALNAIVKGKAIPRPGTPESFKVLMRELQSLGLDIAVHKVETQADGSSLDVEVDLMADQLARRTPPRPTYESLSRESLDDDE.

Positions 1094 to 1117 (QLARRTPPRPTYESLSRESLDDDE) are disordered. The segment covering 1108-1117 (LSRESLDDDE) has biased composition (basic and acidic residues).

It belongs to the RNA polymerase beta chain family. As to quaternary structure, in cyanobacteria the RNAP catalytic core is composed of 2 alpha, 1 beta, 1 beta', 1 gamma and 1 omega subunit. When a sigma factor is associated with the core the holoenzyme is formed, which can initiate transcription.

The enzyme catalyses RNA(n) + a ribonucleoside 5'-triphosphate = RNA(n+1) + diphosphate. Functionally, DNA-dependent RNA polymerase catalyzes the transcription of DNA into RNA using the four ribonucleoside triphosphates as substrates. The sequence is that of DNA-directed RNA polymerase subunit beta from Trichormus variabilis (strain ATCC 29413 / PCC 7937) (Anabaena variabilis).